Here is a 535-residue protein sequence, read N- to C-terminus: Secreted lipase 5 (535 aa).

Residues 1–17 (MHLKSLLLAALPLLLEA) form the signal peptide. Residues asparagine 32 and asparagine 119 are each glycosylated (N-linked (GlcNAc...) asparagine). Residue serine 241 is the Acyl-ester intermediate of the active site. 4 N-linked (GlcNAc...) asparagine glycosylation sites follow: asparagine 282, asparagine 341, asparagine 347, and asparagine 432.

The protein belongs to the type-B carboxylesterase/lipase family.

It is found in the secreted. It carries out the reaction a carboxylic ester + H2O = an alcohol + a carboxylate + H(+). Its function is as follows. Secreted lipase involved in plant virulence. Has a substrate preference for p-nitrophenyl esters with a carbon chain length of C8 (p-nitrophenyl caprylate). This chain is Secreted lipase 5, found in Gibberella zeae (strain ATCC MYA-4620 / CBS 123657 / FGSC 9075 / NRRL 31084 / PH-1) (Wheat head blight fungus).